The following is a 304-amino-acid chain: Lipoprotein signal peptidase (304 aa).

Helical transmembrane passes span I28–V48, P86–F106, and L112–V132. Active-site residues include D148 and D163. Residues D163 to L183 traverse the membrane as a helical segment.

It belongs to the peptidase A8 family.

The protein localises to the cell membrane. It catalyses the reaction Release of signal peptides from bacterial membrane prolipoproteins. Hydrolyzes -Xaa-Yaa-Zaa-|-(S,diacylglyceryl)Cys-, in which Xaa is hydrophobic (preferably Leu), and Yaa (Ala or Ser) and Zaa (Gly or Ala) have small, neutral side chains.. Its pathway is protein modification; lipoprotein biosynthesis (signal peptide cleavage). In terms of biological role, this protein specifically catalyzes the removal of signal peptides from prolipoproteins. The sequence is that of Lipoprotein signal peptidase from Mycoplasmoides gallisepticum (strain R(low / passage 15 / clone 2)) (Mycoplasma gallisepticum).